Here is a 96-residue protein sequence, read N- to C-terminus: MSLSEAQVRHVARLARIALSDEEVNVMRAQLSAILDYIAMLQEVDVSNVPPTAQVTGLTTVWRPDVVGEMLTQEQALANAPDQQDGMFRVRAVFEE.

The protein belongs to the GatC family. Heterotrimer of A, B and C subunits.

It carries out the reaction L-glutamyl-tRNA(Gln) + L-glutamine + ATP + H2O = L-glutaminyl-tRNA(Gln) + L-glutamate + ADP + phosphate + H(+). The enzyme catalyses L-aspartyl-tRNA(Asn) + L-glutamine + ATP + H2O = L-asparaginyl-tRNA(Asn) + L-glutamate + ADP + phosphate + 2 H(+). Its function is as follows. Allows the formation of correctly charged Asn-tRNA(Asn) or Gln-tRNA(Gln) through the transamidation of misacylated Asp-tRNA(Asn) or Glu-tRNA(Gln) in organisms which lack either or both of asparaginyl-tRNA or glutaminyl-tRNA synthetases. The reaction takes place in the presence of glutamine and ATP through an activated phospho-Asp-tRNA(Asn) or phospho-Glu-tRNA(Gln). The chain is Aspartyl/glutamyl-tRNA(Asn/Gln) amidotransferase subunit C from Chloroflexus aggregans (strain MD-66 / DSM 9485).